Consider the following 443-residue polypeptide: Tol-Pal system protein TolB (443 aa).

The signal sequence occupies residues 1–33 (MKIGIINTKIRTVFSAFACMIAASLVCTMPARA).

It belongs to the TolB family. The Tol-Pal system is composed of five core proteins: the inner membrane proteins TolA, TolQ and TolR, the periplasmic protein TolB and the outer membrane protein Pal. They form a network linking the inner and outer membranes and the peptidoglycan layer.

Its subcellular location is the periplasm. Its function is as follows. Part of the Tol-Pal system, which plays a role in outer membrane invagination during cell division and is important for maintaining outer membrane integrity. This is Tol-Pal system protein TolB from Brucella suis (strain ATCC 23445 / NCTC 10510).